Here is an 81-residue protein sequence, read N- to C-terminus: MLFMLDEIMTPREACDRWGITQEALRMKLKRGKDSELVDKLIREGKLKYYRPIEKKRGEWILTVEAMKILFPKSNRSFIIK.

This is an uncharacterized protein from Bacillus anthracis.